A 297-amino-acid chain; its full sequence is Light-independent protochlorophyllide reductase iron-sulfur ATP-binding protein (297 aa).

ATP is bound by residues 41 to 46 (GIGKST) and Lys-70. Ser-45 contacts Mg(2+). 2 residues coordinate [4Fe-4S] cluster: Cys-126 and Cys-160. ATP is bound by residues 211–212 (NR) and 235–237 (PDL).

This sequence belongs to the NifH/BchL/ChlL family. In terms of assembly, homodimer. Protochlorophyllide reductase is composed of three subunits; BchL, BchN and BchB. Requires [4Fe-4S] cluster as cofactor.

It carries out the reaction chlorophyllide a + oxidized 2[4Fe-4S]-[ferredoxin] + 2 ADP + 2 phosphate = protochlorophyllide a + reduced 2[4Fe-4S]-[ferredoxin] + 2 ATP + 2 H2O. The protein operates within porphyrin-containing compound metabolism; bacteriochlorophyll biosynthesis (light-independent). In terms of biological role, component of the dark-operative protochlorophyllide reductase (DPOR) that uses Mg-ATP and reduced ferredoxin to reduce ring D of protochlorophyllide (Pchlide) to form chlorophyllide a (Chlide). This reaction is light-independent. The L component serves as a unique electron donor to the NB-component of the complex, and binds Mg-ATP. The protein is Light-independent protochlorophyllide reductase iron-sulfur ATP-binding protein of Cereibacter sphaeroides (strain KD131 / KCTC 12085) (Rhodobacter sphaeroides).